The primary structure comprises 227 residues: Cytidylate kinase (227 aa).

12 to 20 (GPSGAGKGT) is an ATP binding site.

The protein belongs to the cytidylate kinase family. Type 1 subfamily.

The protein localises to the cytoplasm. The catalysed reaction is CMP + ATP = CDP + ADP. It carries out the reaction dCMP + ATP = dCDP + ADP. This is Cytidylate kinase from Shigella flexneri.